The primary structure comprises 218 residues: Small ribosomal subunit protein uS3 (218 aa).

The 69-residue stretch at 38-106 folds into the KH type-2 domain; the sequence is IREFINQRLS…RVHINILEIK (69 aa).

The protein belongs to the universal ribosomal protein uS3 family. In terms of assembly, part of the 30S ribosomal subunit. Forms a tight complex with proteins S10 and S14.

Binds the lower part of the 30S subunit head. Binds mRNA in the 70S ribosome, positioning it for translation. In Bacillus licheniformis (strain ATCC 14580 / DSM 13 / JCM 2505 / CCUG 7422 / NBRC 12200 / NCIMB 9375 / NCTC 10341 / NRRL NRS-1264 / Gibson 46), this protein is Small ribosomal subunit protein uS3.